The chain runs to 726 residues: L-lysine 6-oxidase (726 aa).

A cross-link (4'-cysteinyl-tryptophylquinone (Cys-Trp)) is located at residues Cys516 to Trp581. A Tryptophylquinone modification is found at Trp581.

In terms of assembly, homotetramer. Requires cysteine tryptophylquinone residue as cofactor. Post-translationally, the cysteine tryptophylquinone (CTQ) is generated by oxidation of the indole ring of a tryptophan residue to form tryptophylquinone, followed by covalent cross-linking with a cysteine residue.

Its subcellular location is the secreted. The enzyme catalyses L-lysine + O2 + H2O = (S)-2-amino-6-oxohexanoate + H2O2 + NH4(+). Inhibited by aminoguanidine, amiloride and beta-aminopropionitrile. Functionally, has antibacterial activity against a wide spectrum of Gram-positive and Gram-negative bacteria including nosocomial isolates of S.aureus and Pseudomonas sp. The antimicrobial activity is due to hydrogen peroxide generated by its lysine oxidase activity. Also has autotoxic activity. Involved in biofilm differentiation; responsible for cell death within microcolonies during biofilm development which is linked to the generation of a phenotypically diverse dispersal population and thus may play a role in colonization. The polypeptide is L-lysine 6-oxidase (lodA) (Marinomonas mediterranea (strain ATCC 700492 / JCM 21426 / NBRC 103028 / MMB-1)).